The sequence spans 1004 residues: MAKQEQAPDRANDVFALTSFLYGGNADYIEELYAKYEDDPNSVDPQWRDFFAKLGDNADDVKKNAEGPSWTRKNWPIAANGELVSALDGNWAEVEKHVTDKLKGKAAKGEAKGAAGTPLTAEEITQAARDSVRAIMMIRAYRMRGHLHANLDPLGLAEKPNDYNELEPENYGFTPADYNRKIFIDNVLGLEYATVPEMLDILKRTYCGAIGVEFMHISDPAEKAWIQERIEGPDKKVAFTPEGKKAILSKLIEAEGFEQFIDVKYKGTKRFGLDGGESLIPALEQIVKRGGQMGLKEVVLGMAHRGRLNVLSQVMGKPHRAIFHEFKGGSYTPDDVEGSGDVKYHLGASSDREFDGNKVHLSLTANPSHLEIVNPVVMGKARAKQDLLVGRTRDDMVPLSERAKVLPLLLHGDAAFAGQGVVAECLGLSGLKGHRVAGTLHFIINNQIGFTTNPAFSRSSPYPSDVAKMIEAPIFHVNGDDPEAVVFAAKVATEFRMTFHKPVVIDMFCYRRFGHNEGDEPSFTQPLMYKAIRAHKTTVQLYGEKLIAEGLVTQDDIDRMKADWRQKLEGEFEAGQSYKPNKADWLDGAWAGLRTADNADEQRRGKTAVPVKTLKEIGKKLVEVPKDFHVHRTIQRFLDNRAKMMETGEGIDWATAESLAFGSLAVEGHPIRLSGQDVERGTFSQRHTVLYDQENQNRYIPLNNLQKGQAIYEAINSMLSEEAVLGYEYGYSLSDPRALVLWEAQFGDFANGAQVVFDQFISSGERKWLRMSGLVCLLPHGFEGQGPEHSSARLERYLQLCAEDNMQVANVTTPANYFHILRRQMKRDFRKPLIMMTPKSLLRHKRAISTLAELSGESSFHRLLWDDAQYNKDEGIKLQKDAKIRRVVLCSGKVYYDLYEEREKRGIDDVYLLRVEQLYPFPAKALINELSRFRHAEMVWCQEEPKNMGAWSFIDPYLEWVLAHIDAKHQRVRYAGRPAAASPATGLMSKHLAQLAAFLEDALG.

This sequence belongs to the alpha-ketoglutarate dehydrogenase family. As to quaternary structure, homodimer. Part of the 2-oxoglutarate dehydrogenase (OGDH) complex composed of E1 (2-oxoglutarate dehydrogenase), E2 (dihydrolipoamide succinyltransferase) and E3 (dihydrolipoamide dehydrogenase); the complex contains multiple copies of the three enzymatic components (E1, E2 and E3). It depends on thiamine diphosphate as a cofactor.

The catalysed reaction is N(6)-[(R)-lipoyl]-L-lysyl-[protein] + 2-oxoglutarate + H(+) = N(6)-[(R)-S(8)-succinyldihydrolipoyl]-L-lysyl-[protein] + CO2. E1 component of the 2-oxoglutarate dehydrogenase (OGDH) complex which catalyzes the decarboxylation of 2-oxoglutarate, the first step in the conversion of 2-oxoglutarate to succinyl-CoA and CO(2). In Brucella suis biovar 1 (strain 1330), this protein is 2-oxoglutarate dehydrogenase E1 component.